The sequence spans 361 residues: Phospho-N-acetylmuramoyl-pentapeptide-transferase (361 aa).

10 helical membrane-spanning segments follow: residues Gly-27–Leu-47, Thr-72–Ala-92, Leu-94–Phe-114, Ala-133–Gly-153, Leu-169–Gly-189, Gly-200–Ser-220, Val-237–Phe-257, Ile-264–Ala-284, Ile-289–Val-309, and Gln-338–Leu-358.

It belongs to the glycosyltransferase 4 family. MraY subfamily. It depends on Mg(2+) as a cofactor.

It localises to the cell inner membrane. The catalysed reaction is UDP-N-acetyl-alpha-D-muramoyl-L-alanyl-gamma-D-glutamyl-meso-2,6-diaminopimeloyl-D-alanyl-D-alanine + di-trans,octa-cis-undecaprenyl phosphate = di-trans,octa-cis-undecaprenyl diphospho-N-acetyl-alpha-D-muramoyl-L-alanyl-D-glutamyl-meso-2,6-diaminopimeloyl-D-alanyl-D-alanine + UMP. The protein operates within cell wall biogenesis; peptidoglycan biosynthesis. Catalyzes the initial step of the lipid cycle reactions in the biosynthesis of the cell wall peptidoglycan: transfers peptidoglycan precursor phospho-MurNAc-pentapeptide from UDP-MurNAc-pentapeptide onto the lipid carrier undecaprenyl phosphate, yielding undecaprenyl-pyrophosphoryl-MurNAc-pentapeptide, known as lipid I. The chain is Phospho-N-acetylmuramoyl-pentapeptide-transferase from Azorhizobium caulinodans (strain ATCC 43989 / DSM 5975 / JCM 20966 / LMG 6465 / NBRC 14845 / NCIMB 13405 / ORS 571).